We begin with the raw amino-acid sequence, 245 residues long: Ribosomal RNA large subunit methyltransferase E (245 aa).

Positions 1-25 (MTKSPIGGNRSGRKLGQKVKKGKLK) are disordered. Over residues 11-25 (SGRKLGQKVKKGKLK) the composition is skewed to basic residues. The S-adenosyl-L-methionine site is built by glycine 81, tryptophan 83, aspartate 104, aspartate 120, and aspartate 144. Lysine 184 (proton acceptor) is an active-site residue.

Belongs to the class I-like SAM-binding methyltransferase superfamily. RNA methyltransferase RlmE family.

It localises to the cytoplasm. The catalysed reaction is uridine(2552) in 23S rRNA + S-adenosyl-L-methionine = 2'-O-methyluridine(2552) in 23S rRNA + S-adenosyl-L-homocysteine + H(+). Specifically methylates the uridine in position 2552 of 23S rRNA at the 2'-O position of the ribose in the fully assembled 50S ribosomal subunit. The polypeptide is Ribosomal RNA large subunit methyltransferase E (Rhizobium meliloti (strain 1021) (Ensifer meliloti)).